Consider the following 202-residue polypeptide: Peptide deformylase 2 (202 aa).

2 residues coordinate Fe cation: C120 and H162. Residue E163 is part of the active site. A Fe cation-binding site is contributed by H166.

Belongs to the polypeptide deformylase family. It depends on Fe(2+) as a cofactor.

The enzyme catalyses N-terminal N-formyl-L-methionyl-[peptide] + H2O = N-terminal L-methionyl-[peptide] + formate. Its function is as follows. Removes the formyl group from the N-terminal Met of newly synthesized proteins. Requires at least a dipeptide for an efficient rate of reaction. N-terminal L-methionine is a prerequisite for activity but the enzyme has broad specificity at other positions. The protein is Peptide deformylase 2 of Rickettsia conorii (strain ATCC VR-613 / Malish 7).